The following is a 674-amino-acid chain: U-box domain-containing protein 16 (674 aa).

Positions 273–347 (NIPADFRCPI…VLWCRDQKIP (75 aa)) constitute a U-box domain. ARM repeat units lie at residues 399–438 (TVAR…NLSI), 441–481 (QNKT…SLAG), and 484–523 (AYRR…NLVA).

It catalyses the reaction S-ubiquitinyl-[E2 ubiquitin-conjugating enzyme]-L-cysteine + [acceptor protein]-L-lysine = [E2 ubiquitin-conjugating enzyme]-L-cysteine + N(6)-ubiquitinyl-[acceptor protein]-L-lysine.. It participates in protein modification; protein ubiquitination. Its function is as follows. Functions as an E3 ubiquitin ligase. This is U-box domain-containing protein 16 (PUB16) from Arabidopsis thaliana (Mouse-ear cress).